Consider the following 251-residue polypeptide: Flap endonuclease Xni (251 aa).

A Mg(2+)-binding site is contributed by aspartate 104. Residues 160–249 (VSPGQLADFW…LDGNLQQLRL (90 aa)) form the 5'-3' exonuclease domain. Positions 171, 172, 180, 182, and 185 each coordinate K(+). The interval 184-189 (GIGPKS) is interaction with DNA.

It belongs to the Xni family. Requires Mg(2+) as cofactor. The cofactor is K(+).

In terms of biological role, has flap endonuclease activity. During DNA replication, flap endonucleases cleave the 5'-overhanging flap structure that is generated by displacement synthesis when DNA polymerase encounters the 5'-end of a downstream Okazaki fragment. This Cronobacter sakazakii (strain ATCC BAA-894) (Enterobacter sakazakii) protein is Flap endonuclease Xni.